Here is a 250-residue protein sequence, read N- to C-terminus: mRNA-decapping protein g5R (250 aa).

The Nudix hydrolase domain maps to Gln-97 to Phe-239. Positions Gly-132 to Gly-153 match the Nudix box motif. A Mg(2+)-binding site is contributed by Glu-138. Catalysis depends on Glu-147, which acts as the Nucleophile. Mg(2+) contacts are provided by Glu-151 and Asp-173.

It belongs to the Nudix hydrolase family. DIPP subfamily. As to quaternary structure, interacts with host RPL23A. It depends on Mg(2+) as a cofactor. Mn(2+) serves as cofactor.

The protein resides in the host rough endoplasmic reticulum. The catalysed reaction is diphospho-myo-inositol polyphosphate + H2O = myo-inositol polyphosphate + phosphate.. Decapping enzyme required for the removal of the 5'-end m7GpppN cap tethered to viral and host mRNAs to allow their decay in cells. May therefore accelerate viral and cellular mRNA turnover to eliminate competing host mRNAs and allow stage-specific synthesis of viral proteins. Acceleration of the turnover of cellular transcripts may even promote the shutoff of host protein synthesis. In addition to the mRNA cap, g5R also efficiently hydrolyzes diphosphoinositol polyphosphates. Down-regulation of the level of PP-InsP5 (diphosphoinositol pentakisphosphate) may play a role in viral manipulation of the cellular secretory pathway, a step necessary for the formation of virions. Binds viral and cellular poly(A) mRNAs, thereby decreasing both types of mRNAs. This is mRNA-decapping protein g5R from Ornithodoros (relapsing fever ticks).